The chain runs to 424 residues: Serine--tRNA ligase (424 aa).

231–233 (TAE) serves as a coordination point for L-serine. 262–264 (RSE) is a binding site for ATP. Glu285 is an L-serine binding site. 349–352 (EISS) is an ATP binding site. Ser385 is a binding site for L-serine.

It belongs to the class-II aminoacyl-tRNA synthetase family. Type-1 seryl-tRNA synthetase subfamily. Homodimer. The tRNA molecule binds across the dimer.

The protein localises to the cytoplasm. The catalysed reaction is tRNA(Ser) + L-serine + ATP = L-seryl-tRNA(Ser) + AMP + diphosphate + H(+). It carries out the reaction tRNA(Sec) + L-serine + ATP = L-seryl-tRNA(Sec) + AMP + diphosphate + H(+). It functions in the pathway aminoacyl-tRNA biosynthesis; selenocysteinyl-tRNA(Sec) biosynthesis; L-seryl-tRNA(Sec) from L-serine and tRNA(Sec): step 1/1. Functionally, catalyzes the attachment of serine to tRNA(Ser). Is also able to aminoacylate tRNA(Sec) with serine, to form the misacylated tRNA L-seryl-tRNA(Sec), which will be further converted into selenocysteinyl-tRNA(Sec). This Bacillus cereus (strain B4264) protein is Serine--tRNA ligase.